The primary structure comprises 1088 residues: DNA-directed RNA polymerase subunit beta (1088 aa).

Belongs to the RNA polymerase beta chain family. As to quaternary structure, in plastids the minimal PEP RNA polymerase catalytic core is composed of four subunits: alpha, beta, beta', and beta''. When a (nuclear-encoded) sigma factor is associated with the core the holoenzyme is formed, which can initiate transcription.

It is found in the plastid. The protein resides in the chloroplast. The catalysed reaction is RNA(n) + a ribonucleoside 5'-triphosphate = RNA(n+1) + diphosphate. Functionally, DNA-dependent RNA polymerase catalyzes the transcription of DNA into RNA using the four ribonucleoside triphosphates as substrates. This is DNA-directed RNA polymerase subunit beta from Ostreococcus tauri.